Consider the following 463-residue polypeptide: Cysteine--tRNA ligase (463 aa).

Cys29 contributes to the Zn(2+) binding site. Positions 31 to 41 match the 'HIGH' region motif; the sequence is PTVYNYAHIGN. The Zn(2+) site is built by Cys211, His236, and Glu240. The short motif at 269–273 is the 'KMSKS' region element; it reads KMSKS. Lys272 serves as a coordination point for ATP.

This sequence belongs to the class-I aminoacyl-tRNA synthetase family. In terms of assembly, monomer. Zn(2+) serves as cofactor.

The protein resides in the cytoplasm. It carries out the reaction tRNA(Cys) + L-cysteine + ATP = L-cysteinyl-tRNA(Cys) + AMP + diphosphate. The chain is Cysteine--tRNA ligase from Caulobacter vibrioides (strain ATCC 19089 / CIP 103742 / CB 15) (Caulobacter crescentus).